Reading from the N-terminus, the 472-residue chain is Aspartyl/glutamyl-tRNA(Asn/Gln) amidotransferase subunit B (472 aa).

The protein belongs to the GatB/GatE family. GatB subfamily. In terms of assembly, heterotrimer of A, B and C subunits.

The enzyme catalyses L-glutamyl-tRNA(Gln) + L-glutamine + ATP + H2O = L-glutaminyl-tRNA(Gln) + L-glutamate + ADP + phosphate + H(+). It carries out the reaction L-aspartyl-tRNA(Asn) + L-glutamine + ATP + H2O = L-asparaginyl-tRNA(Asn) + L-glutamate + ADP + phosphate + 2 H(+). In terms of biological role, allows the formation of correctly charged Asn-tRNA(Asn) or Gln-tRNA(Gln) through the transamidation of misacylated Asp-tRNA(Asn) or Glu-tRNA(Gln) in organisms which lack either or both of asparaginyl-tRNA or glutaminyl-tRNA synthetases. The reaction takes place in the presence of glutamine and ATP through an activated phospho-Asp-tRNA(Asn) or phospho-Glu-tRNA(Gln). The chain is Aspartyl/glutamyl-tRNA(Asn/Gln) amidotransferase subunit B from Campylobacter jejuni subsp. jejuni serotype O:6 (strain 81116 / NCTC 11828).